Reading from the N-terminus, the 297-residue chain is N-acetylneuraminate lyase (297 aa).

Aceneuramate-binding residues include Ser47 and Thr48. Tyr137 serves as the catalytic Proton donor. Residue Lys165 is the Schiff-base intermediate with substrate of the active site. The aceneuramate site is built by Thr167, Gly189, Asp191, Glu192, and Ser208.

This sequence belongs to the DapA family. NanA subfamily. As to quaternary structure, homotetramer.

It is found in the cytoplasm. The catalysed reaction is aceneuramate = aldehydo-N-acetyl-D-mannosamine + pyruvate. Its pathway is amino-sugar metabolism; N-acetylneuraminate degradation; D-fructose 6-phosphate from N-acetylneuraminate: step 1/5. Functionally, catalyzes the reversible aldol cleavage of N-acetylneuraminic acid (sialic acid; Neu5Ac) to form pyruvate and N-acetylmannosamine (ManNAc) via a Schiff base intermediate. The polypeptide is N-acetylneuraminate lyase (Shigella boydii serotype 4 (strain Sb227)).